Reading from the N-terminus, the 185-residue chain is MISVTELRNGTKVEMDGGLWECLEYSHLKMGRGGAKVVTKFRNMETGSIVDRTFNSGEKLQDIYVEGKKMQYLYRDGDDYVFMDMETFDQVHLPPALVGDTAKFMKENTEVEVAMYGDKALSITLPNQVILKIVQTDPGVRGDTVSGGTKPATLETGAVVQVPLFVEQGTDVKVDTRTGQYLSRA.

It belongs to the elongation factor P family.

The protein localises to the cytoplasm. Its pathway is protein biosynthesis; polypeptide chain elongation. Functionally, involved in peptide bond synthesis. Stimulates efficient translation and peptide-bond synthesis on native or reconstituted 70S ribosomes in vitro. Probably functions indirectly by altering the affinity of the ribosome for aminoacyl-tRNA, thus increasing their reactivity as acceptors for peptidyl transferase. The sequence is that of Elongation factor P from Deinococcus geothermalis (strain DSM 11300 / CIP 105573 / AG-3a).